A 589-amino-acid chain; its full sequence is Zinc finger protein 131 (589 aa).

In terms of domain architecture, BTB spans threonine 34 to glycine 98. The Nuclear localization signal 1 motif lies at threonine 137–alanine 148. Over residues glycine 224–glycine 234 the composition is skewed to basic and acidic residues. The disordered stretch occupies residues glycine 224–lysine 247. 2 C2H2-type zinc fingers span residues phenylalanine 254 to histidine 277 and histidine 294 to histidine 316. Glycyl lysine isopeptide (Lys-Gly) (interchain with G-Cter in SUMO2) cross-links involve residues lysine 255 and lysine 261. The short motif at valine 283 to histidine 294 is the Nuclear localization signal 2 element. The C2H2-type 3; degenerate zinc finger occupies phenylalanine 322 to glycine 347. 2 C2H2-type zinc fingers span residues tyrosine 358 to histidine 380 and asparagine 386 to histidine 409. Basic and acidic residues predominate over residues asparagine 539 to threonine 583. A disordered region spans residues asparagine 539–glutamate 589. Lysine 567 is covalently cross-linked (Glycyl lysine isopeptide (Lys-Gly) (interchain with G-Cter in SUMO)).

The protein belongs to the krueppel C2H2-type zinc-finger protein family. Monosumoylated at Lys-567 by CBX4 and UHRF2. Sumoylation may potentiate ZNF131 inhibition of estrogen signaling. Sumoylation does not interfere with ubiquitination. In terms of processing, ubiquitinated.

It localises to the nucleus. Functionally, may be involved in transcriptional regulation as a repressor of ESR1/ER-alpha signaling. Plays a role during development and organogenesis as well as in the function of the adult central nervous system. The chain is Zinc finger protein 131 (ZNF131) from Pongo abelii (Sumatran orangutan).